Here is a 540-residue protein sequence, read N- to C-terminus: Chaperonin GroEL (540 aa).

ATP-binding positions include 29-32, 86-90, glycine 413, and aspartate 495; these read TLGP and DGTTT.

The protein belongs to the chaperonin (HSP60) family. Forms a cylinder of 14 subunits composed of two heptameric rings stacked back-to-back. Interacts with the co-chaperonin GroES.

It is found in the cytoplasm. The catalysed reaction is ATP + H2O + a folded polypeptide = ADP + phosphate + an unfolded polypeptide.. Its function is as follows. Together with its co-chaperonin GroES, plays an essential role in assisting protein folding. The GroEL-GroES system forms a nano-cage that allows encapsulation of the non-native substrate proteins and provides a physical environment optimized to promote and accelerate protein folding. The sequence is that of Chaperonin GroEL from Caldanaerobacter subterraneus subsp. tengcongensis (strain DSM 15242 / JCM 11007 / NBRC 100824 / MB4) (Thermoanaerobacter tengcongensis).